A 441-amino-acid polypeptide reads, in one-letter code: MSNVMQQPKIGFVSLGCPKNLVDSERILTELRTEGYDVVPRYDDADMVIVNTCGFIDSAVQESLEAIGEALNENGKVIVTGCLGAKEDQIREVHPKVLEITGPHSYEQVLQHVHHYVPKPKHNPFLSLVPEQGVKLTPRHYAYLKISEGCNHRCTFCIIPSMRGDLDSRPIGDVLAEAKRLVEAGVKELLVISQDTSAYGVDVKHRTGFWNGSPVKTSMVSLCEQLAKLGVWVRLHYVYPYPHVDDVIPLMAEGKILPYLDIPLQHASPRILKLMKRPGSVDRQLARIKQWREICPELTLRSTFIVGFPGETEDDFQMLLDFLKEARLDRVGCFKYSPVEGATANDLPDQVPEEVKEERWNRFMALQQQISAERLQEKVGREILVIIDEVDEEGAIGRSMADAPEIDGAVYLNGETKLKPGDVVRVKVENADEYDLWGSLV.

The MTTase N-terminal domain occupies 8–118; that stretch reads PKIGFVSLGC…VLQHVHHYVP (111 aa). Cysteine 17, cysteine 53, cysteine 82, cysteine 150, cysteine 154, and cysteine 157 together coordinate [4Fe-4S] cluster. The Radical SAM core domain maps to 136-373; that stretch reads LTPRHYAYLK…MALQQQISAE (238 aa). The TRAM domain maps to 376–441; it reads QEKVGREILV…DEYDLWGSLV (66 aa).

Belongs to the methylthiotransferase family. RimO subfamily. [4Fe-4S] cluster is required as a cofactor.

It is found in the cytoplasm. It catalyses the reaction L-aspartate(89)-[ribosomal protein uS12]-hydrogen + (sulfur carrier)-SH + AH2 + 2 S-adenosyl-L-methionine = 3-methylsulfanyl-L-aspartate(89)-[ribosomal protein uS12]-hydrogen + (sulfur carrier)-H + 5'-deoxyadenosine + L-methionine + A + S-adenosyl-L-homocysteine + 2 H(+). In terms of biological role, catalyzes the methylthiolation of an aspartic acid residue of ribosomal protein uS12. The chain is Ribosomal protein uS12 methylthiotransferase RimO from Cronobacter sakazakii (strain ATCC BAA-894) (Enterobacter sakazakii).